Here is a 549-residue protein sequence, read N- to C-terminus: Fas-activated serine/threonine kinase (549 aa).

Residues 1–30 (MRRPRGEPGPRAPRPTEGATCAGPGESWSP) form a disordered region. An RAP domain is found at 477–535 (VVLVLRERWHFCRDGRVLLGSRALRERHLGLMGYQLLPLPFEELESQRGLPQLKSYLRQ).

It belongs to the FAST protein kinase family. As to quaternary structure, interacts with TIA1; the interactions leads to TIA1 phosphorylation. Interacts with TIAR. Autophosphorylated on serine/threonine residues. Activated by dephosphorylation. In terms of tissue distribution, expressed in heart, brain, placenta, lung, liver, skeletal muscle, kidney and pancreas.

It localises to the mitochondrion matrix. It carries out the reaction L-seryl-[Fas-activated protein] + ATP = O-phospho-L-seryl-[Fas-activated protein] + ADP + H(+). It catalyses the reaction L-threonyl-[Fas-activated protein] + ATP = O-phospho-L-threonyl-[Fas-activated protein] + ADP + H(+). The enzyme catalyses L-seryl-[protein] + ATP = O-phospho-L-seryl-[protein] + ADP + H(+). The catalysed reaction is L-threonyl-[protein] + ATP = O-phospho-L-threonyl-[protein] + ADP + H(+). Its function is as follows. Phosphorylates the splicing regulator TIA1, thereby promoting the inclusion of FAS exon 6, which leads to an mRNA encoding a pro-apoptotic form of the receptor. In terms of biological role, required for the biogenesis of some mitochondrial-encoded mRNAs, specifically stabilizes ND6 (NADH dehydrogenase complex subunit 6) mRNA, and regulates its levels. This is Fas-activated serine/threonine kinase (FASTK) from Homo sapiens (Human).